The chain runs to 261 residues: Cytochrome c oxidase subunit 3 (261 aa).

Residues 1-15 (MTHQTHAYHMVNPSP) are Mitochondrial matrix-facing. Residues 16 to 34 (WPLTGALSALLMTSGLIMW) traverse the membrane as a helical segment. At 35–40 (FHFNST) the chain is on the mitochondrial intermembrane side. The helical transmembrane segment at 41–66 (TLLMLGLTTNMLTMYQWWRDIIREST) threads the bilayer. Topologically, residues 67–72 (FQGHHT) are mitochondrial matrix. The helical transmembrane segment at 73 to 105 (PSVQKGLRYGMILFIISEVLFFTGFFWAFYHSS) threads the bilayer. The Mitochondrial intermembrane portion of the chain corresponds to 106–128 (LAPTPELGGCWPPTGIHPLNPLE). The chain crosses the membrane as a helical span at residues 129 to 152 (VPLLNTSVLLASGVSITWAHHSLM). At 153–155 (EGN) the chain is on the mitochondrial matrix side. Residues 156–183 (RNHMLQALFITIALGVYFTLLQASEYYE) traverse the membrane as a helical segment. Residues 184 to 190 (APFTISD) lie on the Mitochondrial intermembrane side of the membrane. A helical membrane pass occupies residues 191–223 (GVYGSTFFVATGFHGLHVIIGSTFLIVCFFRQL). Residues 224-232 (KFHFTSNHH) lie on the Mitochondrial matrix side of the membrane. The helical transmembrane segment at 233–256 (FGFEAAAWYWHFVDVVWLFLYVSI) threads the bilayer. At 257–261 (YWWGS) the chain is on the mitochondrial intermembrane side.

Belongs to the cytochrome c oxidase subunit 3 family. In terms of assembly, component of the cytochrome c oxidase (complex IV, CIV), a multisubunit enzyme composed of 14 subunits. The complex is composed of a catalytic core of 3 subunits MT-CO1, MT-CO2 and MT-CO3, encoded in the mitochondrial DNA, and 11 supernumerary subunits COX4I, COX5A, COX5B, COX6A, COX6B, COX6C, COX7A, COX7B, COX7C, COX8 and NDUFA4, which are encoded in the nuclear genome. The complex exists as a monomer or a dimer and forms supercomplexes (SCs) in the inner mitochondrial membrane with NADH-ubiquinone oxidoreductase (complex I, CI) and ubiquinol-cytochrome c oxidoreductase (cytochrome b-c1 complex, complex III, CIII), resulting in different assemblies (supercomplex SCI(1)III(2)IV(1) and megacomplex MCI(2)III(2)IV(2)).

Its subcellular location is the mitochondrion inner membrane. The enzyme catalyses 4 Fe(II)-[cytochrome c] + O2 + 8 H(+)(in) = 4 Fe(III)-[cytochrome c] + 2 H2O + 4 H(+)(out). Its function is as follows. Component of the cytochrome c oxidase, the last enzyme in the mitochondrial electron transport chain which drives oxidative phosphorylation. The respiratory chain contains 3 multisubunit complexes succinate dehydrogenase (complex II, CII), ubiquinol-cytochrome c oxidoreductase (cytochrome b-c1 complex, complex III, CIII) and cytochrome c oxidase (complex IV, CIV), that cooperate to transfer electrons derived from NADH and succinate to molecular oxygen, creating an electrochemical gradient over the inner membrane that drives transmembrane transport and the ATP synthase. Cytochrome c oxidase is the component of the respiratory chain that catalyzes the reduction of oxygen to water. Electrons originating from reduced cytochrome c in the intermembrane space (IMS) are transferred via the dinuclear copper A center (CU(A)) of subunit 2 and heme A of subunit 1 to the active site in subunit 1, a binuclear center (BNC) formed by heme A3 and copper B (CU(B)). The BNC reduces molecular oxygen to 2 water molecules using 4 electrons from cytochrome c in the IMS and 4 protons from the mitochondrial matrix. This chain is Cytochrome c oxidase subunit 3 (MT-CO3), found in Pelea capreolus (Gray rhebok).